We begin with the raw amino-acid sequence, 130 residues long: Small ribosomal subunit protein uS11 (130 aa).

The segment at 1-21 (MAPQSKRSGGRKQKKHVPNGV) is disordered. Basic residues predominate over residues 8–17 (SGGRKQKKHV).

It belongs to the universal ribosomal protein uS11 family. In terms of assembly, part of the 30S ribosomal subunit. Interacts with proteins S7 and S18. Binds to IF-3.

In terms of biological role, located on the platform of the 30S subunit, it bridges several disparate RNA helices of the 16S rRNA. Forms part of the Shine-Dalgarno cleft in the 70S ribosome. This chain is Small ribosomal subunit protein uS11, found in Acaryochloris marina (strain MBIC 11017).